The sequence spans 237 residues: Listeriolysin regulatory protein (237 aa).

One can recognise an HTH crp-type domain in the interval 137-212; the sequence is NGKLGSICGQ…NSCFYVQNLD (76 aa).

Functionally, positively regulates expression of listeriolysin, of 1-phosphadidylinositol phosphodiesterase (PI-PLC) and other virulence factors. The polypeptide is Listeriolysin regulatory protein (prfA) (Listeria monocytogenes serovar 1/2a (strain ATCC BAA-679 / EGD-e)).